The chain runs to 136 residues: Small ribosomal subunit protein uS11c (136 aa).

Belongs to the universal ribosomal protein uS11 family. As to quaternary structure, part of the 30S ribosomal subunit.

The protein localises to the plastid. It is found in the chloroplast. This is Small ribosomal subunit protein uS11c from Helianthus annuus (Common sunflower).